A 164-amino-acid chain; its full sequence is Small ribosomal subunit protein uS5 (164 aa).

In terms of domain architecture, S5 DRBM spans 10 to 73 (LEERVVAVNR…DDAKKNLIEV (64 aa)).

Belongs to the universal ribosomal protein uS5 family. In terms of assembly, part of the 30S ribosomal subunit. Contacts proteins S4 and S8.

Its function is as follows. With S4 and S12 plays an important role in translational accuracy. Located at the back of the 30S subunit body where it stabilizes the conformation of the head with respect to the body. The sequence is that of Small ribosomal subunit protein uS5 from Streptococcus pneumoniae serotype 2 (strain D39 / NCTC 7466).